The sequence spans 238 residues: Uridylate kinase (238 aa).

12 to 15 contributes to the ATP binding site; it reads KLSG. G54 is a binding site for UMP. ATP-binding residues include G55 and R59. Residues D74 and 135 to 142 each bind UMP; that span reads TGNPYFTT. ATP contacts are provided by T162, N163, Y168, and D171.

The protein belongs to the UMP kinase family. As to quaternary structure, homohexamer.

The protein resides in the cytoplasm. The enzyme catalyses UMP + ATP = UDP + ADP. It participates in pyrimidine metabolism; CTP biosynthesis via de novo pathway; UDP from UMP (UMPK route): step 1/1. With respect to regulation, inhibited by UTP. In terms of biological role, catalyzes the reversible phosphorylation of UMP to UDP. The protein is Uridylate kinase of Rhodopseudomonas palustris (strain ATCC BAA-98 / CGA009).